A 1052-amino-acid polypeptide reads, in one-letter code: P3N-PIPO polyprotein (1052 aa).

Residues 219 to 362 (KMSDQGVDML…KTMSLKIVHF (144 aa)) enclose the Peptidase S30 domain. Residues H270, D279, and S313 each act as for P1 proteinase activity in the active site. The Involved in interaction with stylet and aphid transmission motif lies at 414–417 (KITC). Residues 672–674 (PTK) carry the Involved in virions binding and aphid transmission motif. Residues 698 to 820 (MYIAKEGYCY…ESSLKHYRVG (123 aa)) enclose the Peptidase C6 domain. Catalysis depends on for helper component proteinase activity residues C706 and H779.

The protein belongs to the potyviridae P3N-PIPO polyprotein family. Interacts (via PIPO domain) with host PCaP1 protein; this interaction may help to anchor the movement complex to the plasma membrane from which the complex could move to the plasmodesmata. In terms of processing, potyviral RNA is expressed as two polyproteins which undergo post-translational proteolytic processing. Genome polyprotein is processed by NIa-pro, P1 and HC-pro proteinases resulting in the production of at least ten individual proteins. P3N-PIPO is cleaved by P1 and HC-pro proteinases resulting in the production of three individual proteins. The P1 proteinase and the HC-pro cleave only their respective C-termini autocatalytically.

It localises to the host cell junction. The protein localises to the host plasmodesma. It carries out the reaction Hydrolyzes a Gly-|-Gly bond at its own C-terminus, commonly in the sequence -Tyr-Xaa-Val-Gly-|-Gly, in the processing of the potyviral polyprotein.. In terms of biological role, required for aphid transmission and also has proteolytic activity. Only cleaves a Gly-Gly dipeptide at its own C-terminus. Interacts with virions and aphid stylets. Acts as a suppressor of RNA-mediated gene silencing, also known as post-transcriptional gene silencing (PTGS), a mechanism of plant viral defense that limits the accumulation of viral RNAs. May have RNA-binding activity. Functionally, allows efficient cell to cell propagation, by bypassing the host cell wall barrier. Transports viral genome to neighboring plant cells directly through plasmosdesmata, without any budding. The polypeptide is P3N-PIPO polyprotein (Turnip mosaic virus (strain Quebec) (TuMV)).